The primary structure comprises 162 residues: Small ribosomal subunit protein uS5 (162 aa).

Residues 7 to 70 form the S5 DRBM domain; it reads EEKMILIRRT…YARRNMVEVP (64 aa).

The protein belongs to the universal ribosomal protein uS5 family. Part of the 30S ribosomal subunit. Contacts proteins S4 and S8.

In terms of biological role, with S4 and S12 plays an important role in translational accuracy. Functionally, located at the back of the 30S subunit body where it stabilizes the conformation of the head with respect to the body. The chain is Small ribosomal subunit protein uS5 (rpsE) from Thermus thermophilus (strain ATCC BAA-163 / DSM 7039 / HB27).